The following is a 143-amino-acid chain: Large ribosomal subunit protein uL15 (143 aa).

A disordered region spans residues 1–59; sequence MELNGIKPADGAKHYKRRVGRGIGSGIGKTAGRGHKGQKSRAGGYHKVGFEGGQMPMQR. Residues 21–31 are compositionally biased toward gly residues; that stretch reads RGIGSGIGKTA.

Belongs to the universal ribosomal protein uL15 family. In terms of assembly, part of the 50S ribosomal subunit.

In terms of biological role, binds to the 23S rRNA. In Albidiferax ferrireducens (strain ATCC BAA-621 / DSM 15236 / T118) (Rhodoferax ferrireducens), this protein is Large ribosomal subunit protein uL15.